A 265-amino-acid polypeptide reads, in one-letter code: Shikimate dehydrogenase (NADP(+)) (265 aa).

Shikimate-binding positions include 15–17 (SLS) and T62. Catalysis depends on K66, which acts as the Proton acceptor. E78 serves as a coordination point for NADP(+). Shikimate contacts are provided by N87 and D102. NADP(+)-binding positions include 126–130 (GAGGV), 150–155 (NRTELK), and V210. A shikimate-binding site is contributed by Y212. Position 233 (G233) interacts with NADP(+).

This sequence belongs to the shikimate dehydrogenase family. Homodimer.

The enzyme catalyses shikimate + NADP(+) = 3-dehydroshikimate + NADPH + H(+). The protein operates within metabolic intermediate biosynthesis; chorismate biosynthesis; chorismate from D-erythrose 4-phosphate and phosphoenolpyruvate: step 4/7. In terms of biological role, involved in the biosynthesis of the chorismate, which leads to the biosynthesis of aromatic amino acids. Catalyzes the reversible NADPH linked reduction of 3-dehydroshikimate (DHSA) to yield shikimate (SA). This chain is Shikimate dehydrogenase (NADP(+)), found in Pelagibacter ubique (strain HTCC1062).